The primary structure comprises 974 residues: Kinase-interacting protein 1 (974 aa).

Positions 10 to 90 (YSWWAASHIR…ERYDHLSKEL (81 aa)) constitute an NAB domain. The disordered stretch occupies residues 151–170 (STASKQKQGKQSSKIEDAAK). Residues 173–423 (LSKNEAIEEI…DVVNQNSCLR (251 aa)) are a coiled coil. The segment at 586 to 614 (AQPTPAEKGDEKVSAQSGNTSVYETHTQK) is disordered. Positions 599–610 (SAQSGNTSVYET) are enriched in polar residues. Positions 641–697 (NEYTAILKNYKEVTKKLSDIEKKDRDTEFELTLQTRELKSAIAKRDEEIHNLRQKLS) form a coiled coil. A disordered region spans residues 714-740 (LLDPSDPSSARGLKPEDLPQIKDGDDE). The segment covering 726-736 (LKPEDLPQIKD) has biased composition (basic and acidic residues). Coiled coils occupy residues 784–807 (HQIQ…RDKE) and 882–905 (AAKF…ELEA).

As to quaternary structure, homodimer or homooligomer. Interacts with PRK1. Post-translationally, phosphorylated by PRK1. Expressed in mature pollen grains and pollen tubes, but not in style, ovary, petal, leaf, root or sepal.

The protein resides in the cytoplasm. In terms of biological role, probably involved in the receptor-like kinase-mediated signal transduction pathway. The chain is Kinase-interacting protein 1 from Petunia integrifolia (Violet-flowered petunia).